A 395-amino-acid chain; its full sequence is G-protein coupled receptor 182 (395 aa).

Residues 1–53 (MSVIPSPRPVSTLEPDNDFRDIHNWTELLHLFNQTFTDCHIEFNENTKHVVLF) are Extracellular-facing. N-linked (GlcNAc...) asparagine glycosylation is found at asparagine 24 and asparagine 33. The helical transmembrane segment at 54–75 (VFYLAIFVVGLVENVLVICVNC) threads the bilayer. Residues 76 to 86 (RRSGRVGMLNL) are Cytoplasmic-facing. Residues 87–109 (YILNMAIADLGIILSLPVWMLEV) form a helical membrane-spanning segment. The Extracellular portion of the chain corresponds to 110 to 123 (MLEYTWLWGSFSCR). The cysteines at positions 122 and 198 are disulfide-linked. A helical transmembrane segment spans residues 124–145 (FIHYFYLVNMYSSIFFLTCLSI). At 146-166 (DRYVTLTNTSPSWQRHQHRIR) the chain is on the cytoplasmic side. The helical transmembrane segment at 167–189 (RAVCAGVWVLSAIIPLPEVVHIQ) threads the bilayer. The Extracellular portion of the chain corresponds to 190 to 213 (LLDGSEPMCLFLAPFETYSAWALA). A helical transmembrane segment spans residues 214–235 (VALSATILGFLLPFLLIAVFNI). Residues 236–254 (LTACRLRRQRQTESRRHCL) are Cytoplasmic-facing. A helical transmembrane segment spans residues 255–276 (LMWAYIVVFAICWLPYQVTMLL). Topologically, residues 277 to 295 (LTLHGTHIFLHCHLVNLLY) are extracellular. Residues 296 to 316 (FFYEIIDCFSMLHCVANPILY) traverse the membrane as a helical segment. At 317 to 395 (NFLSPSFRGR…QTPHLHSAIL (79 aa)) the chain is on the cytoplasmic side. Serine 329 is subject to Phosphoserine.

The protein belongs to the G-protein coupled receptor 1 family. Expressed in liver and lung.

It is found in the cell membrane. In terms of biological role, orphan receptor. This is G-protein coupled receptor 182 (Gpr182) from Mus musculus (Mouse).